The following is a 218-amino-acid chain: Protein-L-isoaspartate O-methyltransferase (218 aa).

Ser66 is a catalytic residue.

It belongs to the methyltransferase superfamily. L-isoaspartyl/D-aspartyl protein methyltransferase family.

The protein resides in the cytoplasm. It carries out the reaction [protein]-L-isoaspartate + S-adenosyl-L-methionine = [protein]-L-isoaspartate alpha-methyl ester + S-adenosyl-L-homocysteine. Functionally, catalyzes the methyl esterification of L-isoaspartyl residues in peptides and proteins that result from spontaneous decomposition of normal L-aspartyl and L-asparaginyl residues. It plays a role in the repair and/or degradation of damaged proteins. This is Protein-L-isoaspartate O-methyltransferase from Caulobacter sp. (strain K31).